A 476-amino-acid polypeptide reads, in one-letter code: Glycogen synthase (476 aa).

Lysine 15 lines the ADP-alpha-D-glucose pocket.

Belongs to the glycosyltransferase 1 family. Bacterial/plant glycogen synthase subfamily.

It carries out the reaction [(1-&gt;4)-alpha-D-glucosyl](n) + ADP-alpha-D-glucose = [(1-&gt;4)-alpha-D-glucosyl](n+1) + ADP + H(+). It functions in the pathway glycan biosynthesis; glycogen biosynthesis. Functionally, synthesizes alpha-1,4-glucan chains using ADP-glucose. The sequence is that of Glycogen synthase from Streptococcus gordonii (strain Challis / ATCC 35105 / BCRC 15272 / CH1 / DL1 / V288).